Here is a 778-residue protein sequence, read N- to C-terminus: Pentatricopeptide repeat-containing protein At3g09650, chloroplastic (778 aa).

The N-terminal 65 residues, 1–65 (MNILRPPTSS…RSASGTANSS (65 aa)), are a transit peptide targeting the chloroplast. 3 PPR repeats span residues 235–269 (DTAAFNAVLNACANLGDTDKYWKLFEEMSEWDCEP), 270–304 (DVLTYNVMIKLCARVGRKELIVFVLERIIDKGIKV), and 305–339 (CMTTMHSLVAAYVGFGDLRTAERIVQAMREKRRDL). Residues 351–381 (LKEKEEEEAEDDEDAFEDDEDSGYSARDEVS) are disordered. The span at 355–372 (EEEEAEDDEDAFEDDEDS) shows a compositional bias: acidic residues. PPR repeat units lie at residues 413-443 (DSRIYTTLMKGYMKNGRVADTARMLEAMRRQ), 451-485 (DEVTYTTVVSAFVNAGLMDRARQVLAEMARMGVPA), 486-521 (NRITYNVLLKGYCKQLQIDRAEDLLREMTEDAGIEP), 522-556 (DVVSYNIIIDGCILIDDSAGALAFFNEMRTRGIAP), 557-587 (TKISYTTLMKAFAMSGQPKLANRVFDEMMND), 593-627 (DLIAWNMLVEGYCRLGLIEDAQRVVSRMKENGFYP), and 628-658 (NVATYGSLANGVSQARKPGDALLLWKEIKER).

It belongs to the PPR family. P subfamily.

The protein localises to the plastid. It is found in the chloroplast stroma. Functionally, involved in the processing of polycistronic chloroplast psbB-psbT-psbH-petB-petD transcript. Could bind RNA. In Arabidopsis thaliana (Mouse-ear cress), this protein is Pentatricopeptide repeat-containing protein At3g09650, chloroplastic (HCF152).